A 166-amino-acid chain; its full sequence is Ubiquitin-conjugating enzyme E2 7 (166 aa).

An N-acetylalanine modification is found at Ala-2. Positions Gln-4–Glu-164 constitute a UBC core domain. Cys-89 serves as the catalytic Glycyl thioester intermediate.

This sequence belongs to the ubiquitin-conjugating enzyme family.

The catalysed reaction is S-ubiquitinyl-[E1 ubiquitin-activating enzyme]-L-cysteine + [E2 ubiquitin-conjugating enzyme]-L-cysteine = [E1 ubiquitin-activating enzyme]-L-cysteine + S-ubiquitinyl-[E2 ubiquitin-conjugating enzyme]-L-cysteine.. It participates in protein modification; protein ubiquitination. Functionally, accepts the ubiquitin from the E1 complex and catalyzes its covalent attachment to other proteins. Involved in the formation of multiubiquitin chains. Signal the protein for selective degradation. The sequence is that of Ubiquitin-conjugating enzyme E2 7 (UBC7) from Arabidopsis thaliana (Mouse-ear cress).